The primary structure comprises 89 residues: Albumin-1 (89 aa).

Alanine 1 is a signal peptide. Intrachain disulfides connect cysteine 4–cysteine 21, cysteine 8–cysteine 23, and cysteine 16–cysteine 33. Residues 39–46 (LSSVAKMI) constitute a propeptide that is removed on maturation.

Post-translationally, the C-terminal glycine may be removed from A1b.

In terms of biological role, A1b binds to basic 7S globulin (BG) and stimulates its phosphorylation activity. This chain is Albumin-1 (LEG), found in Vigna radiata var. radiata (Mung bean).